Consider the following 229-residue polypeptide: C-&gt;U-editing enzyme APOBEC-1 (229 aa).

Residues 10–134 form the CMP/dCMP-type deaminase domain; sequence VDPTLRRRIE…QRNRQGLRDL (125 aa). His61 is a binding site for Zn(2+). Residue Glu63 is the Proton donor of the active site. Cys93 and Cys96 together coordinate Zn(2+).

The protein belongs to the cytidine and deoxycytidylate deaminase family. In terms of assembly, homodimer. Interacts with A1CF; form an mRNA editing complex. Interacts with RBM47; form an mRNA editing complex. Found in a complex with CELF2/CUGBP2 and A1CF. Interacts with HNRPAB. Interacts with SYNCRIP. Zn(2+) is required as a cofactor. In terms of tissue distribution, expressed in the spleen. Expressed at lower level in the kidney, testis, lung, brain and liver.

It localises to the cytoplasm. Its subcellular location is the nucleus. It carries out the reaction a cytidine in mRNA + H2O + H(+) = a uridine in mRNA + NH4(+). It catalyses the reaction cytidine(6666) in apoB mRNA + H2O + H(+) = uridine(6666) in apoB mRNA + NH4(+). Functionally, cytidine deaminase catalyzing the cytidine to uridine postranscriptional editing of a variety of mRNAs. Form complexes with cofactors that confer differential editing activity and selectivity. Responsible for the postranscriptional editing of a CAA codon for Gln to a UAA codon for stop in the apolipoprotein B mRNA. Also involved in CGA (Arg) to UGA (Stop) editing in the NF1 mRNA. May also play a role in the epigenetic regulation of gene expression by participating in DNA demethylation. In Mus musculus (Mouse), this protein is C-&gt;U-editing enzyme APOBEC-1.